Consider the following 270-residue polypeptide: Putative serine acetyltransferase (270 aa).

Belongs to the transferase hexapeptide repeat family.

The protein localises to the cytoplasm. It is found in the nucleus. The catalysed reaction is L-serine + acetyl-CoA = O-acetyl-L-serine + CoA. It functions in the pathway amino-acid biosynthesis; L-cysteine biosynthesis; L-cysteine from L-serine: step 1/2. In Schizosaccharomyces pombe (strain 972 / ATCC 24843) (Fission yeast), this protein is Putative serine acetyltransferase.